A 531-amino-acid chain; its full sequence is GTPase Obg (531 aa).

The Obg domain maps to 2-159 (ASFVDRVIVH…QEVELELKSI (158 aa)). Positions 160–341 (ADIALVGFPS…LSFAMAALVS (182 aa)) constitute an OBG-type G domain. GTP-binding positions include 166 to 173 (GFPSAGKS), 191 to 195 (FTTLV), 212 to 215 (DVPG), 293 to 296 (NKVD), and 322 to 324 (STA). 2 residues coordinate Mg(2+): Ser-173 and Thr-193. A disordered region spans residues 346–365 (QEEQREQQRQTVPVLQPEPV). The OCT domain maps to 368–453 (RRGRDRREFV…ENGVVFDWEP (86 aa)). Positions 459–531 (AELLGGPRGS…TSETKETNEK (73 aa)) are disordered. Basic and acidic residues-rich tracts occupy residues 468-507 (SDLR…ERRA) and 514-531 (VDAR…TNEK).

The protein belongs to the TRAFAC class OBG-HflX-like GTPase superfamily. OBG GTPase family. As to quaternary structure, monomer. Mg(2+) serves as cofactor.

Its subcellular location is the cytoplasm. Functionally, an essential GTPase which binds GTP, GDP and possibly (p)ppGpp with moderate affinity, with high nucleotide exchange rates and a fairly low GTP hydrolysis rate. Plays a role in control of the cell cycle, stress response, ribosome biogenesis and in those bacteria that undergo differentiation, in morphogenesis control. The sequence is that of GTPase Obg from Kocuria rhizophila (strain ATCC 9341 / DSM 348 / NBRC 103217 / DC2201).